Here is a 379-residue protein sequence, read N- to C-terminus: Glucose-1-phosphate adenylyltransferase (379 aa).

Residues G164, 179-180, and S190 each bind alpha-D-glucose 1-phosphate; that span reads EK.

The protein belongs to the bacterial/plant glucose-1-phosphate adenylyltransferase family. In terms of assembly, homotetramer.

It carries out the reaction alpha-D-glucose 1-phosphate + ATP + H(+) = ADP-alpha-D-glucose + diphosphate. Its pathway is glycan biosynthesis; glycogen biosynthesis. Involved in the biosynthesis of ADP-glucose, a building block required for the elongation reactions to produce glycogen. Catalyzes the reaction between ATP and alpha-D-glucose 1-phosphate (G1P) to produce pyrophosphate and ADP-Glc. In Streptococcus agalactiae serotype III (strain NEM316), this protein is Glucose-1-phosphate adenylyltransferase.